A 121-amino-acid polypeptide reads, in one-letter code: Dihydroneopterin aldolase (121 aa).

Substrate-binding positions include Glu22, Tyr54, and 73–74; that span reads IE. Residue Lys100 is the Proton donor/acceptor of the active site.

Belongs to the DHNA family. As to quaternary structure, homooctamer. Four molecules assemble into a ring, and two rings come together to give a cylinder with a hole of at least 13 a diameter.

The catalysed reaction is 7,8-dihydroneopterin = 6-hydroxymethyl-7,8-dihydropterin + glycolaldehyde. The enzyme catalyses 7,8-dihydroneopterin = 7,8-dihydromonapterin. It functions in the pathway cofactor biosynthesis; tetrahydrofolate biosynthesis; 2-amino-4-hydroxy-6-hydroxymethyl-7,8-dihydropteridine diphosphate from 7,8-dihydroneopterin triphosphate: step 3/4. Its function is as follows. Catalyzes the conversion of 7,8-dihydroneopterin to 6-hydroxymethyl-7,8-dihydropterin. Can also catalyze the epimerization of carbon 2' of dihydroneopterin to dihydromonapterin. The polypeptide is Dihydroneopterin aldolase (folB) (Staphylococcus epidermidis (strain ATCC 35984 / DSM 28319 / BCRC 17069 / CCUG 31568 / BM 3577 / RP62A)).